The primary structure comprises 243 residues: Type III pantothenate kinase (243 aa).

7-14 (DLGNSRFK) contributes to the ATP binding site. Substrate is bound by residues tyrosine 91 and 98–101 (GVDR). Aspartate 100 acts as the Proton acceptor in catalysis. Threonine 122 lines the ATP pocket. Threonine 172 lines the substrate pocket.

It belongs to the type III pantothenate kinase family. In terms of assembly, homodimer. NH4(+) serves as cofactor. K(+) is required as a cofactor.

The protein localises to the cytoplasm. It catalyses the reaction (R)-pantothenate + ATP = (R)-4'-phosphopantothenate + ADP + H(+). The protein operates within cofactor biosynthesis; coenzyme A biosynthesis; CoA from (R)-pantothenate: step 1/5. Catalyzes the phosphorylation of pantothenate (Pan), the first step in CoA biosynthesis. This Stenotrophomonas maltophilia (strain K279a) protein is Type III pantothenate kinase.